Consider the following 414-residue polypeptide: Tyrosine--tRNA ligase (414 aa).

Tyr38 is an L-tyrosine binding site. The 'HIGH' region motif lies at 43–52; the sequence is PTATSLHLGN. L-tyrosine contacts are provided by Tyr165 and Gln169. The short motif at 228-232 is the 'KMSKS' region element; the sequence is KFGKS. An ATP-binding site is contributed by Lys231. The S4 RNA-binding domain maps to 349–414; the sequence is FNANQIIDLG…KKYFFIIELI (66 aa).

It belongs to the class-I aminoacyl-tRNA synthetase family. TyrS type 1 subfamily. In terms of assembly, homodimer.

Its subcellular location is the cytoplasm. It catalyses the reaction tRNA(Tyr) + L-tyrosine + ATP = L-tyrosyl-tRNA(Tyr) + AMP + diphosphate + H(+). Its function is as follows. Catalyzes the attachment of tyrosine to tRNA(Tyr) in a two-step reaction: tyrosine is first activated by ATP to form Tyr-AMP and then transferred to the acceptor end of tRNA(Tyr). The chain is Tyrosine--tRNA ligase from Mesomycoplasma hyopneumoniae (strain 232) (Mycoplasma hyopneumoniae).